Reading from the N-terminus, the 431-residue chain is MAAQASEKLQKLDLNGQSGDAEADAPAAGQTQAGEAEDDSDDDEVEDGNAAGEGAASGGGAKVQSSPPRVPLSTLFAGKEYPEGEIVEYQNENSYRTTNEEKRYLDRMKNDFLQEYRQAAEVHRQVRQYAQKTIKPGQTLTEIAEGIEESVRALTGHQGLEEGDNLKGGMGFPCGLSINHCAAHYTPNAGNKMVLQQGDVMKVDFGAHINGRIVDSAFTVAFDPVYDPLLAAVKDATNTGIREAGIDVRMSDIGAAIQEAMESYEVEINGTMYPVKCIRNLNGHNIDQHIIHGGKSVPIVKGGDQTKMEEGEVFAIETFGSTGKGYVREDMETSHYALIPDHSQVPLRLSSAKNLLNVINKNFGTLPFCRRYLDRLGQDKYLLGLNNLVSSGIVQDYPPLCDIKGSYTAQYEHTIVLRPNVKEVISRGDDY.

The interval 1 to 76 is disordered; that stretch reads MAAQASEKLQ…PPRVPLSTLF (76 aa). Positions 35–47 are enriched in acidic residues; sequence EAEDDSDDDEVED. Histidine 184 is a substrate binding site. Positions 204, 215, and 284 each coordinate a divalent metal cation. Histidine 292 contributes to the substrate binding site. Residues glutamate 317 and glutamate 412 each contribute to the a divalent metal cation site.

Belongs to the peptidase M24A family. Methionine aminopeptidase eukaryotic type 2 subfamily. The cofactor is Co(2+). Zn(2+) is required as a cofactor. Mn(2+) serves as cofactor. Requires Fe(2+) as cofactor.

The protein resides in the cytoplasm. It catalyses the reaction Release of N-terminal amino acids, preferentially methionine, from peptides and arylamides.. Its function is as follows. Cotranslationally removes the N-terminal methionine from nascent proteins. The N-terminal methionine is often cleaved when the second residue in the primary sequence is small and uncharged (Met-Ala-, Cys, Gly, Pro, Ser, Thr, or Val). In Aspergillus niger (strain ATCC MYA-4892 / CBS 513.88 / FGSC A1513), this protein is Methionine aminopeptidase 2-2.